Reading from the N-terminus, the 371-residue chain is Enterobactin C-glucosyltransferase (371 aa).

It belongs to the glycosyltransferase 28 family.

Its subcellular location is the cytoplasm. The catalysed reaction is enterobactin + UDP-alpha-D-glucose = monoglucosyl-enterobactin + UDP. The enzyme catalyses monoglucosyl-enterobactin + UDP-alpha-D-glucose = diglucosyl-enterobactin + UDP + H(+). It catalyses the reaction diglucosyl-enterobactin + UDP-alpha-D-glucose = triglucosyl-enterobactin + UDP + H(+). It functions in the pathway siderophore biosynthesis; enterobactin biosynthesis. Functionally, catalyzes the successive monoglucosylation, diglucosylation and triglucosylation of enterobactin (Ent). Transfers glucosyl groups from uridine-5'-diphosphoglucose (UDP-Glc) to C5 of one, two or three of the 2,3-dihydroxybenzoyl (DHB) units of Ent to yield monoglucosyl-C-Ent (MGE), diglucosyl-C-Ent (DGE) and triglucosyl-C-Ent (TGE). Glucosylation decreases the membrane affinity of Ent and increases the iron acquisition rate. The polypeptide is Enterobactin C-glucosyltransferase (Escherichia coli O6:H1 (strain CFT073 / ATCC 700928 / UPEC)).